Reading from the N-terminus, the 184-residue chain is Signal peptidase complex subunit 3 (184 aa).

The Cytoplasmic portion of the chain corresponds to 1 to 14; the sequence is MFSFVQRFQNVSNQ. Residues 15–35 form a helical; Signal-anchor for type II membrane protein membrane-spanning segment; sequence AFSMGIVMVVFIMASSYYQLI. Residues 36 to 184 are Lumenal-facing; it reads NNNAFSVPSN…TLTVENKNKV (149 aa). N-linked (GlcNAc...) asparagine glycans are attached at residues Asn102 and Asn173.

It belongs to the SPCS3 family. Component of the signal peptidase complex (SPC) composed of a catalytic subunit SEC11 and three accessory subunits SPC1, SPC2 and SPC3. The complex induces a local thinning of the ER membrane which is used to measure the length of the signal peptide (SP) h-region of protein substrates. This ensures the selectivity of the complex towards h-regions shorter than 18-20 amino acids. Interacts with SEC11. SPC associates with the translocon complex.

The protein resides in the endoplasmic reticulum membrane. Functionally, essential component of the signal peptidase complex (SPC) which catalyzes the cleavage of N-terminal signal sequences from nascent proteins as they are translocated into the lumen of the endoplasmic reticulum. Essential for the SPC catalytic activity, possibly by stabilizing and positioning the active center of the complex close to the lumenal surface. Essential for viability. The protein is Signal peptidase complex subunit 3 (SPC3) of Saccharomyces cerevisiae (strain ATCC 204508 / S288c) (Baker's yeast).